The primary structure comprises 421 residues: Probable dual-specificity RNA methyltransferase RlmN (421 aa).

Residues 1-23 (MTATTAESGRPDQPPTAEAGRPV) form a disordered region. E127 serves as the catalytic Proton acceptor. One can recognise a Radical SAM core domain in the interval 133–372 (YPDRATVCVS…VTTVRDTRGR (240 aa)). C140 and C378 form a disulfide bridge. C147, C151, and C154 together coordinate [4Fe-4S] cluster. S-adenosyl-L-methionine contacts are provided by residues 202-203 (GE), S236, 259-261 (SLH), and N335. Residue C378 is the S-methylcysteine intermediate of the active site. Positions 383 to 421 (AEPAGKPERTDRPEQVGSDRLVEFGAVGSTTPDGDRVLR) are disordered. Over residues 387-396 (GKPERTDRPE) the composition is skewed to basic and acidic residues.

The protein belongs to the radical SAM superfamily. RlmN family. Requires [4Fe-4S] cluster as cofactor.

It is found in the cytoplasm. It carries out the reaction adenosine(2503) in 23S rRNA + 2 reduced [2Fe-2S]-[ferredoxin] + 2 S-adenosyl-L-methionine = 2-methyladenosine(2503) in 23S rRNA + 5'-deoxyadenosine + L-methionine + 2 oxidized [2Fe-2S]-[ferredoxin] + S-adenosyl-L-homocysteine. The catalysed reaction is adenosine(37) in tRNA + 2 reduced [2Fe-2S]-[ferredoxin] + 2 S-adenosyl-L-methionine = 2-methyladenosine(37) in tRNA + 5'-deoxyadenosine + L-methionine + 2 oxidized [2Fe-2S]-[ferredoxin] + S-adenosyl-L-homocysteine. Functionally, specifically methylates position 2 of adenine 2503 in 23S rRNA and position 2 of adenine 37 in tRNAs. This Frankia casuarinae (strain DSM 45818 / CECT 9043 / HFP020203 / CcI3) protein is Probable dual-specificity RNA methyltransferase RlmN.